We begin with the raw amino-acid sequence, 248 residues long: 1-(5-phosphoribosyl)-5-[(5-phosphoribosylamino)methylideneamino] imidazole-4-carboxamide isomerase (248 aa).

Residue Asp8 is the Proton acceptor of the active site. Asp131 serves as the catalytic Proton donor.

It belongs to the HisA/HisF family.

The protein resides in the cytoplasm. The catalysed reaction is 1-(5-phospho-beta-D-ribosyl)-5-[(5-phospho-beta-D-ribosylamino)methylideneamino]imidazole-4-carboxamide = 5-[(5-phospho-1-deoxy-D-ribulos-1-ylimino)methylamino]-1-(5-phospho-beta-D-ribosyl)imidazole-4-carboxamide. It functions in the pathway amino-acid biosynthesis; L-histidine biosynthesis; L-histidine from 5-phospho-alpha-D-ribose 1-diphosphate: step 4/9. The chain is 1-(5-phosphoribosyl)-5-[(5-phosphoribosylamino)methylideneamino] imidazole-4-carboxamide isomerase from Cupriavidus pinatubonensis (strain JMP 134 / LMG 1197) (Cupriavidus necator (strain JMP 134)).